The primary structure comprises 172 residues: Shikimate kinase (172 aa).

Glycine 11 to threonine 16 is a binding site for ATP. Serine 15 is a Mg(2+) binding site. Substrate-binding residues include aspartate 33, arginine 57, and glycine 79. Arginine 117 provides a ligand contact to ATP. Arginine 136 is a binding site for substrate. An ATP-binding site is contributed by arginine 153.

Belongs to the shikimate kinase family. As to quaternary structure, monomer. Mg(2+) serves as cofactor.

It localises to the cytoplasm. It carries out the reaction shikimate + ATP = 3-phosphoshikimate + ADP + H(+). It functions in the pathway metabolic intermediate biosynthesis; chorismate biosynthesis; chorismate from D-erythrose 4-phosphate and phosphoenolpyruvate: step 5/7. Catalyzes the specific phosphorylation of the 3-hydroxyl group of shikimic acid using ATP as a cosubstrate. This chain is Shikimate kinase, found in Pseudomonas putida (strain ATCC 700007 / DSM 6899 / JCM 31910 / BCRC 17059 / LMG 24140 / F1).